Reading from the N-terminus, the 367-residue chain is Teichoic acid glycerol-phosphate primase (367 aa).

The protein belongs to the CDP-glycerol glycerophosphotransferase family.

It is found in the cell membrane. The enzyme catalyses N-acetyl-beta-D-mannosaminyl-(1-&gt;4)-N-acetyl-alpha-D-glucosaminyl di-trans,octa-cis-undecaprenyl diphosphate + CDP-glycerol = 4-O-[(2R)-glycerylphospho]-N-acetyl-beta-D-mannosaminyl-(1-&gt;4)-N-acetyl-alpha-D-glucosaminyl di-trans,octa-cis-undecaprenyl diphosphate + CMP + H(+). It functions in the pathway cell wall biogenesis; poly(ribitol phosphate) teichoic acid biosynthesis. Functionally, catalyzes the addition of a single glycerol phosphate residue to the prenoldiphosphate-linked disaccharide. This is Teichoic acid glycerol-phosphate primase (tarB) from Staphylococcus aureus (strain NCTC 8325 / PS 47).